The sequence spans 207 residues: Large ribosomal subunit protein bL25 (207 aa).

This sequence belongs to the bacterial ribosomal protein bL25 family. CTC subfamily. In terms of assembly, part of the 50S ribosomal subunit; part of the 5S rRNA/L5/L18/L25 subcomplex. Contacts the 5S rRNA. Binds to the 5S rRNA independently of L5 and L18.

In terms of biological role, this is one of the proteins that binds to the 5S RNA in the ribosome where it forms part of the central protuberance. The chain is Large ribosomal subunit protein bL25 from Dictyoglomus thermophilum (strain ATCC 35947 / DSM 3960 / H-6-12).